Here is a 275-residue protein sequence, read N- to C-terminus: Ribosome biogenesis protein RLP7 (275 aa).

The interval 14–45 (KRKNNDRKRLEKQEQARQRQLEQKKKNDQRSK) is disordered. The span at 20 to 44 (RKRLEKQEQARQRQLEQKKKNDQRS) shows a compositional bias: basic and acidic residues.

Belongs to the universal ribosomal protein uL30 family.

It localises to the nucleus. Its subcellular location is the nucleolus. In terms of biological role, involved in the biogenesis of the 60S ribosomal subunit. May act as a specificity factor that binds precursor rRNAs and tethers the enzymes that carry out the early 5' to 3' exonucleolytic reactions that generate the mature rRNAs. This Debaryomyces hansenii (strain ATCC 36239 / CBS 767 / BCRC 21394 / JCM 1990 / NBRC 0083 / IGC 2968) (Yeast) protein is Ribosome biogenesis protein RLP7 (RLP7).